We begin with the raw amino-acid sequence, 533 residues long: Adenosine deaminase (533 aa).

An N-terminal signal peptide occupies residues 1 to 19 (MKILLAVVFVLNLTNLAVP).

Belongs to the metallo-dependent hydrolases superfamily. Adenosine and AMP deaminases family. ADGF subfamily. It depends on Zn(2+) as a cofactor. Post-translationally, proteolytically cleaved by human mast cell tryptase and chymase. As to expression, female salivary gland (at protein level).

It localises to the secreted. The enzyme catalyses adenosine + H2O + H(+) = inosine + NH4(+). The catalysed reaction is 2'-deoxyadenosine + H2O + H(+) = 2'-deoxyinosine + NH4(+). Functionally, catalyzes the deamination of adenosine to inosine and deoxyadenosine to deoxyinosine. Induces degranulation of host mast cells, and secretion of tryptase and IL6. Modulates enzymatic activities of human tryptase and chymase. Induces release of cytokines, such as IL1B, IL6, TNF, CCL2, IFN-beta (INFB1) and ISG15, from host monocytes and macrophages. Activates host NF-kappa-B signaling pathway in TAK1/MAP3K7-dependent manner. Its function is as follows. (Microbial infection) Promotes replication of dengue virus type 2 in host cells probably via modulation of cytokine production in host macrophages and monocytes. The chain is Adenosine deaminase from Aedes albopictus (Asian tiger mosquito).